Here is a 918-residue protein sequence, read N- to C-terminus: Protein SEY1 homolog (918 aa).

Residues 1–701 (MESSNHLPNK…AGTSVSSWRN (701 aa)) are Cytoplasmic-facing. The region spanning 46–280 (GFKFNVVTIL…VPSDGFFVYS (235 aa)) is the GB1/RHD3-type G domain. Position 56–63 (56–63 (GSQSSGKS)) interacts with GTP. Residues 554-626 (SLVLLLKATQ…DALTLLQVLK (73 aa)) are a coiled coil. A helical membrane pass occupies residues 702-722 (IPPVFWLVLLVLGWNELRAAF). The Lumenal portion of the chain corresponds to 723–725 (RVL). The helical transmembrane segment at 726–746 (LKFYILIPLLIVSYFTFSYSA) threads the bilayer. Over 747-918 (NKLLGPKANE…CGKAVHLAQW (172 aa)) the chain is Cytoplasmic.

It belongs to the TRAFAC class dynamin-like GTPase superfamily. GB1/RHD3 GTPase family. RHD3 subfamily.

The protein resides in the endoplasmic reticulum membrane. Its function is as follows. Probable GTP-binding protein that may be involved in cell development. In Theileria annulata, this protein is Protein SEY1 homolog.